A 225-amino-acid chain; its full sequence is Uracil-DNA glycosylase (225 aa).

Aspartate 67 acts as the Proton acceptor in catalysis.

Belongs to the uracil-DNA glycosylase (UDG) superfamily. UNG family.

Its subcellular location is the cytoplasm. It catalyses the reaction Hydrolyzes single-stranded DNA or mismatched double-stranded DNA and polynucleotides, releasing free uracil.. Excises uracil residues from the DNA which can arise as a result of misincorporation of dUMP residues by DNA polymerase or due to deamination of cytosine. This chain is Uracil-DNA glycosylase, found in Coxiella burnetii (strain Dugway 5J108-111).